A 159-amino-acid polypeptide reads, in one-letter code: MPRTRTLANAPIMILNGPNLNLLGQRQPEIYGSDTLADVEALCAKAAAAHGGTVDFRQSNHEGELVDWIHEARLHHVGIVINPAAYSHTSVAILDALNTCDGLPVVEVHISNIHQREEFRHHSYVSLRADGVIAGCGVQGYAFAVERVAALAETGRADA.

The active-site Proton acceptor is the Tyr31. The substrate site is built by Asn82, His88, and Asp95. His109 serves as the catalytic Proton donor. Residues 110 to 111 (IS) and Arg120 each bind substrate.

Belongs to the type-II 3-dehydroquinase family. In terms of assembly, homododecamer.

The catalysed reaction is 3-dehydroquinate = 3-dehydroshikimate + H2O. Its pathway is metabolic intermediate biosynthesis; chorismate biosynthesis; chorismate from D-erythrose 4-phosphate and phosphoenolpyruvate: step 3/7. Catalyzes a trans-dehydration via an enolate intermediate. This is 3-dehydroquinate dehydratase from Streptomyces avermitilis (strain ATCC 31267 / DSM 46492 / JCM 5070 / NBRC 14893 / NCIMB 12804 / NRRL 8165 / MA-4680).